Consider the following 102-residue polypeptide: DET1- and DDB1-associated protein 1 (102 aa).

N-acetylalanine is present on Ala2. Ser33 carries the phosphoserine modification. Basic and acidic residues-rich tracts occupy residues 66 to 75 (KNAAKKRDQE) and 91 to 102 (ARTDSPDMHEDT). The tract at residues 66–102 (KNAAKKRDQEQVELEGESSAPPRKVARTDSPDMHEDT) is disordered. Ser95 is subject to Phosphoserine.

The protein belongs to the DDA1 family. Component of numerous DCX (DDB1-CUL4-X-box) E3 ubiquitin-protein ligase complexes which consist of a core of DDB1, cullin-4 (CUL4A or CUL4B), DDA1 and RBX1. Component of the DCX(DCAF15) complex, also named CLR4(DCAF15) complex, composed of DCAF15, DDB1, cullin-4 (CUL4A or CUL4B), DDA1 and RBX1. Part of the DDD core complex containing DET1, DDA1 and DDB1; the DDD core complex recruits a specific UBE2E enzyme, such as UBE2E1, UBE2E2 UBE2E3, to form specific DDD-E2 complexes.

It participates in protein modification; protein ubiquitination. Functions as a component of numerous distinct DCX (DDB1-CUL4-X-box) E3 ubiquitin-protein ligase complexes which mediate the ubiquitination and subsequent proteasomal degradation of target proteins. In the DCX complexes, acts as a scaffolding subunit required to stabilize the complex. This Bos taurus (Bovine) protein is DET1- and DDB1-associated protein 1.